Consider the following 544-residue polypeptide: CTP synthase (544 aa).

The tract at residues 1 to 266 is amidoligase domain; the sequence is MSTKFIFVTG…DYFVCRRFHL (266 aa). S14 lines the CTP pocket. A UTP-binding site is contributed by S14. ATP is bound by residues 15-20 and D72; that span reads SLGKGI. Residues D72 and E140 each coordinate Mg(2+). CTP contacts are provided by residues 147–149, 187–192, and K223; these read DIE and KTKPTQ. UTP is bound by residues 187–192 and K223; that span reads KTKPTQ. The Glutamine amidotransferase type-1 domain occupies 291–542; it reads TIGMVGKYIE…VAAAHIHQKA (252 aa). G352 is a binding site for L-glutamine. Residue C379 is the Nucleophile; for glutamine hydrolysis of the active site. L-glutamine-binding positions include 380-383, E403, and R470; that span reads LGMQ. Catalysis depends on residues H515 and E517.

Belongs to the CTP synthase family. In terms of assembly, homotetramer.

It carries out the reaction UTP + L-glutamine + ATP + H2O = CTP + L-glutamate + ADP + phosphate + 2 H(+). The catalysed reaction is L-glutamine + H2O = L-glutamate + NH4(+). The enzyme catalyses UTP + NH4(+) + ATP = CTP + ADP + phosphate + 2 H(+). The protein operates within pyrimidine metabolism; CTP biosynthesis via de novo pathway; CTP from UDP: step 2/2. Allosterically activated by GTP, when glutamine is the substrate; GTP has no effect on the reaction when ammonia is the substrate. The allosteric effector GTP functions by stabilizing the protein conformation that binds the tetrahedral intermediate(s) formed during glutamine hydrolysis. Inhibited by the product CTP, via allosteric rather than competitive inhibition. Catalyzes the ATP-dependent amination of UTP to CTP with either L-glutamine or ammonia as the source of nitrogen. Regulates intracellular CTP levels through interactions with the four ribonucleotide triphosphates. The sequence is that of CTP synthase from Pseudoalteromonas translucida (strain TAC 125).